The following is a 1273-amino-acid chain: Receptor-type tyrosine-protein phosphatase C (1273 aa).

The first 23 residues, 1 to 23 (MYLWLKLLAFSLALLGPEVFVTG), serve as a signal peptide directing secretion. Over 24–546 (QGTTDDGLDT…KPQSTSYNSK (523 aa)) the chain is Extracellular. The interval 45-192 (LPARTTEFTP…TEIATPQTKP (148 aa)) is disordered. 3 stretches are compositionally biased toward polar residues: residues 50-77 (TEFT…SSTL), 84-111 (QPDS…TLTA), and 141-192 (RNST…QTKP). N-linked (GlcNAc...) asparagine glycosylation is present at asparagine 62. 15 N-linked (GlcNAc...) asparagine glycosylation sites follow: asparagine 142, asparagine 153, asparagine 164, asparagine 178, asparagine 200, asparagine 245, asparagine 250, asparagine 271, asparagine 282, asparagine 327, asparagine 333, asparagine 371, asparagine 374, asparagine 471, and asparagine 502. 2 consecutive Fibronectin type-III domains span residues 361 to 452 (PEML…TKAA) and 453 to 545 (RPGK…SYNS). Residues 547 to 567 (ALIIFLVFLIIVTSIALLVVL) traverse the membrane as a helical segment. The Cytoplasmic portion of the chain corresponds to 568–1273 (YKIYDLRKKR…PMSPALTPSS (706 aa)). 2 consecutive Tyrosine-protein phosphatase domains span residues 622-881 (FLAE…LVEY) and 913-1196 (LEAE…MASI). Position 652 is a phosphotyrosine (tyrosine 652). Residues aspartate 790, 822–828 (CSAGVGR), and glutamine 866 contribute to the substrate site. Catalysis depends on cysteine 822, which acts as the Phosphocysteine intermediate. Residues serine 944, serine 963, serine 966, serine 970, serine 973, serine 974, and serine 978 each carry the phosphoserine modification. The interval 960 to 984 (LEMSKESEAESDESSDEDSDSEETS) is disordered. A compositionally biased stretch (acidic residues) spans 968–981 (AESDESSDEDSDSE). Residue cysteine 1137 is the Phosphocysteine intermediate of the active site. A phosphoserine mark is found at serine 1209 and serine 1266. A disordered region spans residues 1219–1273 (VDGAKQDANCVQPADPLNKAQEDSKEVGASEPASGSEEPEHSANGPMSPALTPSS).

Belongs to the protein-tyrosine phosphatase family. Receptor class 1/6 subfamily. Interacts with SKAP1. Interacts with DPP4; the interaction is enhanced in an interleukin-12-dependent manner in activated lymphocytes. Binds GANAB and PRKCSH. Interacts with CD53; this interaction stabilizes PTPRC on the membrane and is required for optimal phosphatase activity. Interacts with CLEC10A. Post-translationally, heavily N- and O-glycosylated. The cytoplasmic domain contains potential phosphorylation sites. Isoform 1 and isoform 2 are found in thymocyte and lymph node. Isoform 4 and isoform 3 are found in the lymph nod.

It localises to the cell membrane. Its subcellular location is the membrane raft. It is found in the synapse. It catalyses the reaction O-phospho-L-tyrosyl-[protein] + H2O = L-tyrosyl-[protein] + phosphate. In terms of biological role, protein tyrosine-protein phosphatase required for T-cell activation through the antigen receptor. Acts as a positive regulator of T-cell coactivation upon binding to DPP4. The first PTPase domain has enzymatic activity, while the second one seems to affect the substrate specificity of the first one. Upon T-cell activation, recruits and dephosphorylates SKAP1 and FYN. Dephosphorylates LYN, and thereby modulates LYN activity. Interacts with CLEC10A at antigen presenting cell-T cell contact; CLEC10A on immature dendritic cells recognizes Tn antigen-carrying PTPRC/CD45 receptor on effector T cells and modulates T cell activation threshold to limit autoreactivity. The protein is Receptor-type tyrosine-protein phosphatase C (Ptprc) of Rattus norvegicus (Rat).